The primary structure comprises 440 residues: Adenylosuccinate lyase (440 aa).

N(6)-(1,2-dicarboxyethyl)-AMP is bound by residues 4 to 5 (RY), 67 to 69 (KHD), and 93 to 94 (TS). The Proton donor/acceptor role is filled by His141. Gln212 contacts N(6)-(1,2-dicarboxyethyl)-AMP. The active-site Proton donor/acceptor is Ser262. Residues Ser263, 268–270 (KRN), Asn276, and 307–311 (SVERF) contribute to the N(6)-(1,2-dicarboxyethyl)-AMP site.

Belongs to the lyase 1 family. Adenylosuccinate lyase subfamily. Homotetramer. Residues from neighboring subunits contribute catalytic and substrate-binding residues to each active site.

It carries out the reaction N(6)-(1,2-dicarboxyethyl)-AMP = fumarate + AMP. It catalyses the reaction (2S)-2-[5-amino-1-(5-phospho-beta-D-ribosyl)imidazole-4-carboxamido]succinate = 5-amino-1-(5-phospho-beta-D-ribosyl)imidazole-4-carboxamide + fumarate. It participates in purine metabolism; AMP biosynthesis via de novo pathway; AMP from IMP: step 2/2. Its pathway is purine metabolism; IMP biosynthesis via de novo pathway; 5-amino-1-(5-phospho-D-ribosyl)imidazole-4-carboxamide from 5-amino-1-(5-phospho-D-ribosyl)imidazole-4-carboxylate: step 2/2. Catalyzes two reactions in de novo purine nucleotide biosynthesis. Catalyzes the breakdown of 5-aminoimidazole- (N-succinylocarboxamide) ribotide (SAICAR or 2-[5-amino-1-(5-phospho-beta-D-ribosyl)imidazole-4-carboxamido]succinate) to 5-aminoimidazole-4-carboxamide ribotide (AICAR or 5-amino-1-(5-phospho-beta-D-ribosyl)imidazole-4-carboxamide) and fumarate, and of adenylosuccinate (ADS or N(6)-(1,2-dicarboxyethyl)-AMP) to adenosine monophosphate (AMP) and fumarate. In Helicobacter pylori (strain J99 / ATCC 700824) (Campylobacter pylori J99), this protein is Adenylosuccinate lyase (purB).